Reading from the N-terminus, the 2453-residue chain is Nuclear receptor corepressor 1 (2453 aa).

The segment covering 1–29 (MSSSGYPPNQGAFSTEQSRYPSHSVQYTF) has biased composition (polar residues). Disordered stretches follow at residues 1-116 (MSSS…QVSD), 147-177 (PAFG…SKLS), and 206-231 (QQQL…VEQK). Positions 1-373 (MSSSGYPPNQ…QRGAGLSATI (373 aa)) are interaction with ZBTB33 and HEXIM1. Positions 51–64 (SQASQLLQQQQQQQ) are enriched in low complexity. Basic and acidic residues-rich tracts occupy residues 77–88 (PGSDRPQERRSG) and 99–116 (VDHD…QVSD). Residue Ser172 is modified to Phosphoserine. The stretch at 174–216 (SKLSKEELIQSMDRVDREIAKVEQQILKLKKKQQQLEEEAAKP) forms a coiled coil. Positions 212–221 (EAAKPPEPEK) are enriched in basic and acidic residues. The residue at position 224 (Ser224) is a Phosphoserine. Positions 254–312 (FEGLGPKVELPLYNQPSDTKVYHENIKTNQVMRKKLILFFKRRNHARKQREQKICQRYD) are interaction with SIN3A/B. A coiled-coil region spans residues 299-328 (ARKQREQKICQRYDQLMEAWEKKVDRIENN). The SANT 1 domain maps to 435–486 (QFMNVWTDHEKEIFKDKFIQHPKNFGLIASYLERKSVPDCVLYYYLTKKNEN). Disordered stretches follow at residues 497-631 (KRRG…TEEE) and 677-908 (LLQQ…PERQ). A coiled-coil region spans residues 501–550 (RNQQIARPSQEEKVEEKEEDKAEKTEKKEEEKKDDEEKDDKEDSKETTKE). 2 stretches are compositionally biased toward basic and acidic residues: residues 509 to 531 (SQEE…KEEE) and 541 to 556 (KEDS…RTEA). Low complexity predominate over residues 592–604 (EAAAANAAAAATE). Over residues 605–616 (EPPPPLPPPPEP) the composition is skewed to pro residues. The SANT 2 domain occupies 622–673 (VETSRWTEEEMEVAKKGLVEHGRNWAAIAKMVGTKSEAQCKNFYFNYKRRHN). Over residues 697-707 (QCESVASTVSA) the composition is skewed to polar residues. The span at 708–727 (QEDEDIEASNEEENPEDSEG) shows a compositional bias: acidic residues. The span at 771 to 787 (TTDPAPCASPSSAVPTT) shows a compositional bias: low complexity. Residues 851–885 (GEGDAKERDLESTSEKTEARDEDVVVAEQIERPEP) show a composition bias toward basic and acidic residues. Position 1011 is a phosphoserine (Ser1011). The disordered stretch occupies residues 1034–1058 (VRLPTTRPTRPPPPLIPSSKTTVAS). A Glycyl lysine isopeptide (Lys-Gly) (interchain with G-Cter in SUMO1); alternate cross-link involves residue Lys1117. A Glycyl lysine isopeptide (Lys-Gly) (interchain with G-Cter in SUMO2); alternate cross-link involves residue Lys1117. At Ser1122 the chain carries Phosphoserine. Residue Lys1195 forms a Glycyl lysine isopeptide (Lys-Gly) (interchain with G-Cter in SUMO2) linkage. Phosphoserine occurs at positions 1206, 1207, 1274, 1292, and 1333. At Lys1347 the chain carries N6-acetyllysine. Thr1378 carries the post-translational modification Phosphothreonine. A Glycyl lysine isopeptide (Lys-Gly) (interchain with G-Cter in SUMO2) cross-link involves residue Lys1400. A Glycyl lysine isopeptide (Lys-Gly) (interchain with G-Cter in SUMO2); alternate cross-link involves residue Lys1423. Lys1423 carries the post-translational modification N6-acetyllysine; alternate. The tract at residues 1450–1544 (GEPVRARHTS…SIPAKSPVPG (95 aa)) is disordered. Residues Ser1459 and Ser1481 each carry the phosphoserine modification. The span at 1459–1469 (SVVSSGPSVLR) shows a compositional bias: polar residues. Over residues 1495–1514 (VSYQNTISRGSPMMNRTSDV) the composition is skewed to polar residues. Residues 1510 to 2453 (RTSDVSSSKS…QYETLSDSDD (944 aa)) are interaction with C1D. Lys1525 is covalently cross-linked (Glycyl lysine isopeptide (Lys-Gly) (interchain with G-Cter in SUMO2)). Residue Ser1598 is modified to Phosphoserine. Disordered stretches follow at residues 1697–1780 (RPYN…VRTQ) and 1902–1939 (ALPS…RTRG). Basic and acidic residues-rich tracts occupy residues 1718–1745 (AERE…RERI) and 1919–1937 (AGKD…ELRT). Positions 1949–1953 (IDVII) match the CORNR box 1 motif. Positions 1959-2060 (SDKDARERGS…SSQSEGMGQV (102 aa)) are disordered. Low complexity predominate over residues 1968-1979 (SQSSDSSSSLSS). Phosphoserine is present on residues Ser1993 and Ser1997. The ID1 stretch occupies residues 2050–2129 (PSSQSEGMGQ…QSQTVLHPRP (80 aa)). Residues 2065–2068 (RLIT) form a required for interaction with RARA in the absence of its ligand region. Positions 2073-2077 (ICQII) match the CORNR box 2 motif. Residues 2088–2124 (SQASTSTFQTSPSALSSTPVRTKTSSRYSPESQSQTV) show a composition bias toward polar residues. The segment at 2088 to 2174 (SQASTSTFQT…SPPQGPAVHE (87 aa)) is disordered. Ser2116, Ser2134, Ser2150, Ser2165, and Ser2198 each carry phosphoserine. Over residues 2138 to 2156 (LVDKSRGSRPGKSPERSHI) the composition is skewed to basic and acidic residues. The segment at 2226–2287 (IFRKLNSSGG…EDIIRKALMG (62 aa)) is ID2. The CORNR box 3 motif lies at 2277–2281 (LEDII). Residues 2303-2396 (PVGIMPGSAS…RPSSTGSTQF (94 aa)) form a disordered region. The segment covering 2310–2319 (SASTSVVTSS) has biased composition (low complexity). Thr2412 bears the Phosphothreonine mark. Phosphoserine is present on residues Ser2449 and Ser2451.

It belongs to the N-CoR nuclear receptor corepressors family. Forms a large corepressor complex that contains SIN3A/B and histone deacetylases HDAC1 and HDAC2. This complex associates with the thyroid receptor (TR) and the retinoid acid receptor (RAR) in the absence of ligand. Interacts directly with RARA; the interaction is facilitated with RARA trimethylation. Component of the N-Cor repressor complex, at least composed of CBFA2T3, HEXIM1, NCOR1, NCOR2, HDAC3, TBL1X, TBL1XR1, CORO2A and GPS2. Interacts with ZBTB33; the interaction serves to recruit the N-CoR complex to promoter regions containing methylated CpG dinucleotides. Interacts with TRIM28 and KDM3A. Interacts (via the RD1 domain) with BAZ1A (via its N-terminal); the interaction corepresses a number of NCOR1-regulated genes. Interacts with BCL6, C1D, DACH1, HEXIM1, HDAC7, RORA, RORC, SAP30, SIAH2, SIN3A and SIN3B. May interact with DEAF1. Interacts with RXRA. Interacts with SETD5. Interacts with VDR. Interacts with ZBTB7A. Interacts with AR. Interacts with HDAC3. Post-translationally, ubiquitinated; mediated by SIAH2 and leading to its subsequent proteasomal degradation. In terms of tissue distribution, ubiquitous.

Its subcellular location is the nucleus. In terms of biological role, mediates transcriptional repression by certain nuclear receptors. Part of a complex which promotes histone deacetylation and the formation of repressive chromatin structures which may impede the access of basal transcription factors. Participates in the transcriptional repressor activity produced by BCL6. Recruited by ZBTB7A to the androgen response elements/ARE on target genes, negatively regulates androgen receptor signaling and androgen-induced cell proliferation. Mediates the NR1D1-dependent repression and circadian regulation of TSHB expression. The NCOR1-HDAC3 complex regulates the circadian expression of the core clock gene ARTNL/BMAL1 and the genes involved in lipid metabolism in the liver. The protein is Nuclear receptor corepressor 1 (Ncor1) of Mus musculus (Mouse).